The primary structure comprises 200 residues: Large ribosomal subunit protein uL18 (200 aa).

The protein belongs to the universal ribosomal protein uL18 family. Part of the 50S ribosomal subunit. Contacts the 5S and 23S rRNAs.

In terms of biological role, this is one of the proteins that bind and probably mediate the attachment of the 5S RNA into the large ribosomal subunit, where it forms part of the central protuberance. This chain is Large ribosomal subunit protein uL18, found in Thermococcus sibiricus (strain DSM 12597 / MM 739).